A 37-amino-acid polypeptide reads, in one-letter code: Mau operon transcriptional activator (37 aa).

It belongs to the LysR transcriptional regulatory family.

Transcriptional activator of the mau genes involved in methylamine metabolism. The polypeptide is Mau operon transcriptional activator (mauR) (Paracoccus versutus (Thiobacillus versutus)).